Consider the following 2399-residue polypeptide: Norsolorinic acid synthase (2399 aa).

The interval 10–247 (LVFGDQTYDF…RQIPIYVPAH (238 aa)) is starter unit:ACP transacylase (SAT) domain. Positions 372 to 805 (KSKLAIVSMS…GGNTALLIED (434 aa)) constitute a Ketosynthase family 3 (KS3) domain. Active-site for beta-ketoacyl synthase activity residues include cysteine 544, histidine 679, and histidine 722. A malonyl-CoA:ACP transacylase (MAT) domain region spans residues 905 to 1192 (FAFTGQGSQY…LCGMIKNILG (288 aa)). The active-site For acyl/malonyl transferase activity is serine 995. Residues 1307-1327 (VQEAPAAKTETKKMSKLDPTK) are disordered. The span at 1315-1327 (TETKKMSKLDPTK) shows a compositional bias: basic and acidic residues. Residues 1340-1483 (HKVIEEKTEP…CTVRFTTDSQ (144 aa)) are N-terminal hotdog fold. The region spanning 1340–1658 (HKVIEEKTEP…LRSVPRKALR (319 aa)) is the PKS/mFAS DH domain. The segment at 1353-1658 (QFTVETDISR…LRSVPRKALR (306 aa)) is product template (PT) domain. Catalysis depends on histidine 1372, which acts as the Proton acceptor; for dehydratase activity. The segment at 1510-1658 (LTHYNTKSGY…LRSVPRKALR (149 aa)) is C-terminal hotdog fold. The Proton donor; for dehydratase activity role is filled by aspartate 1570. The tract at residues 1665-1734 (MDKGIRQRGG…AALKASVPKA (70 aa)) is disordered. Low complexity predominate over residues 1677–1698 (GAAKGAVAAPAPAKKMVEPVKA). Residues 1708 to 1723 (AAPPSPSKAAPPPAPK) show a composition bias toward pro residues. Residues 1724–1734 (PAALKASVPKA) are compositionally biased toward low complexity. Carrier domains are found at residues 1733–1812 (KADP…AGAA), 1877–1953 (SKVF…GGSG), and 2020–2099 (VART…TGSS). Residues serine 1770, serine 1911, and serine 2057 each carry the O-(pantetheine 4'-phosphoryl)serine modification. Residues 2098–2115 (SSADSDSSSVASNPADPA) are compositionally biased toward low complexity. The disordered stretch occupies residues 2098–2149 (SSADSDSSSVASNPADPAATPPRSESSDTEPDDEAPSKPKSGPGSTDSCRST). Residues 2140–2149 (PGSTDSCRST) are compositionally biased toward polar residues. The interval 2164–2393 (TLFLLPDGGG…KARVNYVSDL (230 aa)) is thioesterase/Claisen cyclase (TE/CLC) domain. The active-site For thioesterase activity is serine 2234.

Pantetheine 4'-phosphate is required as a cofactor.

It catalyses the reaction hexanoyl-[ACP] + 7 malonyl-CoA + 6 H(+) = noranthrone + holo-[ACP] + 7 CO2 + 7 CoA + 2 H2O. It functions in the pathway mycotoxin biosynthesis. Polyketide synthase; part of the fragmented gene cluster that mediates the biosynthesis of dothistromin (DOTH), a polyketide toxin very similar in structure to the aflatoxin precursor, versicolorin B. The first step of the pathway is the conversion of acetate to norsolorinic acid (NOR) and requires the fatty acid synthase subunits hexA and hexB, as well as the polyketide synthase pksA. PksA combines a hexanoyl starter unit and 7 malonyl-CoA extender units to synthesize the precursor NOR. The hexanoyl starter unit is provided to the acyl-carrier protein (ACP) domain by the fungal fatty acid synthase hexA/hexB. The second step is the conversion of NOR to averantin (AVN) and requires the norsolorinic acid ketoreductase nor1, which catalyzes the dehydration of norsolorinic acid to form (1'S)-averantin. The cytochrome P450 monooxygenase avnA then catalyzes the hydroxylation of AVN to 5'hydroxyaverantin (HAVN). The next step is performed by adhA that transforms HAVN to averufin (AVF). Averufin might then be converted to hydroxyversicolorone by cypX and avfA. Hydroxyversicolorone is further converted versiconal hemiacetal acetate (VHA) by moxY. VHA is then the substrate for the versiconal hemiacetal acetate esterase est1 to yield versiconal (VAL). Versicolorin B synthase vbsA then converts VAL to versicolorin B (VERB) by closing the bisfuran ring. Then, the activity of the versicolorin B desaturase verB leads to versicolorin A (VERA). DotB, a predicted chloroperoxidase, may perform epoxidation of the A-ring of VERA. Alternatively, a cytochrome P450, such as cypX or avnA could catalyze this step. It is also possible that another, uncharacterized, cytochrome P450 enzyme is responsible for this step. Opening of the epoxide could potentially be achieved by the epoxide hydrolase epoA. However, epoA seems not to be required for DOTH biosynthesis, but other epoxide hydrolases may have the ability to complement this hydrolysis. Alternatively, opening of the epoxide ring could be achieved non-enzymatically. The next step is the deoxygenation of ring A to yield the 5,8-dihydroxyanthraquinone which is most likely catalyzed by the NADPH dehydrogenase encoded by ver1. The last stages of DOTH biosynthesis are proposed to involve hydroxylation of the bisfuran. OrdB and norB might have oxidative roles here. An alternative possibility is that cytochrome P450 monoogenases such as avnA and cypX might perform these steps in addition to previously proposed steps. The chain is Norsolorinic acid synthase from Dothistroma septosporum (Red band needle blight fungus).